The sequence spans 41 residues: Photosystem II reaction center protein L (41 aa).

Residues 20-40 (LFLGLLLVFVLGILSPATSLT) form a helical membrane-spanning segment.

It belongs to the PsbL family. PSII is composed of 1 copy each of membrane proteins PsbA, PsbB, PsbC, PsbD, PsbE, PsbF, PsbH, PsbI, PsbJ, PsbK, PsbL, PsbM, PsbT, PsbX, PsbY, PsbZ, Psb30/Ycf12, peripheral proteins PsbO, CyanoQ (PsbQ), PsbU, PsbV and a large number of cofactors. It forms dimeric complexes.

The protein resides in the cellular thylakoid membrane. Its function is as follows. One of the components of the core complex of photosystem II (PSII). PSII is a light-driven water:plastoquinone oxidoreductase that uses light energy to abstract electrons from H(2)O, generating O(2) and a proton gradient subsequently used for ATP formation. It consists of a core antenna complex that captures photons, and an electron transfer chain that converts photonic excitation into a charge separation. This subunit is found at the monomer-monomer interface and is required for correct PSII assembly and/or dimerization. The sequence is that of Photosystem II reaction center protein L from Synechococcus sp. (strain ATCC 27144 / PCC 6301 / SAUG 1402/1) (Anacystis nidulans).